A 359-amino-acid polypeptide reads, in one-letter code: UPF0284 protein MTH_1426 (359 aa).

Belongs to the UPF0284 family.

In Methanothermobacter thermautotrophicus (strain ATCC 29096 / DSM 1053 / JCM 10044 / NBRC 100330 / Delta H) (Methanobacterium thermoautotrophicum), this protein is UPF0284 protein MTH_1426.